The chain runs to 341 residues: 4-hydroxy-2-oxovalerate aldolase 3 (341 aa).

The Pyruvate carboxyltransferase domain occupies 5–257 (ITLHDMTLRD…ETGVDVYRIA (253 aa)). 13–14 (RD) contacts substrate. Residue aspartate 14 coordinates Mn(2+). The active-site Proton acceptor is histidine 17. Substrate is bound by residues serine 167 and histidine 196. Histidine 196 and histidine 198 together coordinate Mn(2+). Substrate is bound at residue tyrosine 287.

The protein belongs to the 4-hydroxy-2-oxovalerate aldolase family.

It catalyses the reaction (S)-4-hydroxy-2-oxopentanoate = acetaldehyde + pyruvate. The sequence is that of 4-hydroxy-2-oxovalerate aldolase 3 (bpHI) from Cupriavidus necator (strain ATCC 17699 / DSM 428 / KCTC 22496 / NCIMB 10442 / H16 / Stanier 337) (Ralstonia eutropha).